The primary structure comprises 812 residues: E3 UFM1-protein ligase 1 homolog (812 aa).

The segment at 389–495 (IKHSAGQGKP…KTKEDNTNIF (107 aa)) is disordered. Composition is skewed to basic and acidic residues over residues 403–415 (SEHR…KDLG) and 475–491 (DAKH…KEDN).

Belongs to the UFL1 family.

In terms of biological role, E3 UFM1-protein ligase that mediates ufmylation of target proteins. The chain is E3 UFM1-protein ligase 1 homolog from Oryza sativa subsp. indica (Rice).